Consider the following 1304-residue polypeptide: MDNNNSNNKNNEESNNIVIPILSEKEKKHLYEFEIIRILKKDEFSTTCKAKKLSGQFNEKRVNFCIIKIIKKRVKKFDSKKNEIIIEIDPRKEREILEKIKHICVLEYYGYSEDEDNGYIYTEYIQGGIDIVETVTNKLLKEHSHSFQSEDIIRRCAFQLVLLLNHLHNNLHIIHGNINTDNVLIADQEFSLKLFDFSLSKDISYYSKDNNNNNNNNNNNNNNNNNNNNNNNNNNNNNNANNSNNNTLNNLSIVNNNSSSSSNDNSSEAEGGGGGGEASITSTISTILSGSSSSQLSTPSTSLESSFSLEINLNDSSCYLIAPEIRNQQKITSKGLSKKSDIWGLGCLLLLMVGGDPKITTNFEPTIPYHLSNNCKNFIQKCLIQDPYHRWDTNLLLTHKFIEKTSFENSCNNQNNSSTTTTTTINTYSIENEENILLINGSNGMNEFEEIPNYITTLKFQESFNMEIVNEMFTDSIVHLEFPQGFNKLDFNELPDFLSTLIYHGEFNIESNYHSKSLKPRDIPKSIIHLQLPNYNLKIRRNSIPDQTKFLILGSDLGENEIQSLINLPPSIIDLEFGCDLELILNFLTQEMIPSNITSLKINSQQIFLPFKRSNPFGLTNNIGNNNSNNGEQFNIPIDELPLSKDINDLMILETVEINNLNQLNSNKLLTLTNRVGKLIFSKEFDEPLTIGCIKSRSITSLKFNKGSRFNQLLVVGCLPVNLTSLEFGDRFNQALSVGCIPPKVTHLKFGRCFNQPLKLGVIPDSCTFIQFGSQFNQSLEPMVIPSSVKELIFGSQYNQPTIQGTFPDRIKKLVFSDDHDQFHSQDTLPKSLVHLEFGESQNFNQILFNQSSSNLIPSLTPPPPIYQKLTTFIFNGYFTVPLKVFDLPLSITHLELPQYNDILEKDCIPSFVKTLVLGSSFTIIESFINLPKSITSLSFGCDENVIGLINQSLIPPNCNTLKINGQSISLPITQTLQIFKNPILPTESSLILSQQQQQQQQQQQMDLSVEYENQNFLTTNTLNQGSWIISINNFSNRKDQFYSPIFSLIGSNWRCKFYSNGKDASTSGKLSIFISNCDLLNNPFTIFLEKSISYKLTLINQKNPNESIQKSSSHTFSIKEFNHGYGSFIGLFSLLNPNNGFLVNNTIKVRIDAAPTSPLVNTYDKYNIGLNQAFSYSVPMMSKKSEPFISPIFMSCGRKWIIKIYPMGQPSSNYMSVFLEYRDEGEENVHFSLELISQLYPEQSIKYWVQYRFNSKSNSFGYPKFIGVSTLMDPDMGFLVNDTIILNVSILQLKPIKKSFGFL.

The Protein kinase domain occupies 33 to 402 (FEIIRILKKD…TNLLLTHKFI (370 aa)). Residues 39–47 (LKKDEFSTT) and Lys68 each bind ATP. Residues 208-277 (KDNNNNNNNN…EAEGGGGGGE (70 aa)) are disordered. Low complexity predominate over residues 210–269 (NNNNNNNNNNNNNNNNNNNNNNNNNNNNNNANNSNNNTLNNLSIVNNNSSSSSNDNSSEA). 5 FNIP repeats span residues 514-556 (HSKS…LGSD), 710-753 (FNQL…FGRC), 754-797 (FNQP…FGSQ), 798-841 (YNQP…FGES), and 900-943 (YNDI…FGCD). 2 MATH domains span residues 1025 to 1154 (QGSW…RIDA) and 1172 to 1291 (NQAF…NVSI).

This sequence belongs to the protein kinase superfamily. STE Ser/Thr protein kinase family.

This is Probable inactive serine/threonine-protein kinase fnkC (fnkC) from Dictyostelium discoideum (Social amoeba).